Here is a 198-residue protein sequence, read N- to C-terminus: Na(+)-translocating NADH-quinone reductase subunit E (198 aa).

6 helical membrane-spanning segments follow: residues 11–31 (SIFI…FLAV), 40–60 (GLGI…NLVF), 77–97 (FLGF…LEMF), 110–130 (GIFL…SFMV), 140–160 (VVYG…MAAI), and 176–196 (LGIT…FSGI).

It belongs to the NqrDE/RnfAE family. As to quaternary structure, composed of six subunits; NqrA, NqrB, NqrC, NqrD, NqrE and NqrF.

It is found in the cell inner membrane. The enzyme catalyses a ubiquinone + n Na(+)(in) + NADH + H(+) = a ubiquinol + n Na(+)(out) + NAD(+). In terms of biological role, NQR complex catalyzes the reduction of ubiquinone-1 to ubiquinol by two successive reactions, coupled with the transport of Na(+) ions from the cytoplasm to the periplasm. NqrA to NqrE are probably involved in the second step, the conversion of ubisemiquinone to ubiquinol. This is Na(+)-translocating NADH-quinone reductase subunit E from Tolumonas auensis (strain DSM 9187 / NBRC 110442 / TA 4).